A 449-amino-acid chain; its full sequence is MNAALSQWKDAHAARLRDYSAVRVSGRVSAVRGILLECKIPAAKVGDLCEVSKADGSFLLAEIVGFTQECTLLSALGAPDGIQVGAPIRPLGIAHRIGVDDSLLGCVLDGFGRPLLGDCLGAFAGPDDRRETLPVIADALPPTQRPRITNALPTGVRAIDSAILLGEGQRVGLFAGAGCGKTTLMAELARNMGCDVIVFGLIGERGRELREFLDHELDETLRRRSVLVCATSDRSSMERARAAFTATAIAEAFRARGQKVLLLLDSLTRFARAQREIGIASGEPLGRGGLPPSVYTLLPRLVERAGMSENGSITALYTVLIEQDSMNDPVADEVRSLLDGHIVLSRKLAERGHYPAIDVSASISRILSNVTGREHQRANNRLRQLLAAYKQVEMLLRLGEYQAGADPVTDCAVQLNDDINEFLRQDLREPVPLQETLDGLLRLTSRLPE.

An ATP-binding site is contributed by 178–183; it reads GCGKTT.

It belongs to the ATPase alpha/beta chains family. T3SS ATPase subfamily. As to quaternary structure, the core secretion machinery of the T3SS is composed of approximately 20 different proteins, including cytoplasmic components, a base, an export apparatus and a needle. This subunit is part of the cytosolic complex. Forms homododecamers. Comprises two hexameric rings that are probably stacked face-to-face by the association of their C-terminal domains. Also present as monomer and homohexamer in solution.

The protein resides in the cytoplasm. The enzyme catalyses ATP + H2O + cellular proteinSide 1 = ADP + phosphate + cellular proteinSide 2.. Its activity is regulated as follows. Oligomerization increases ATPase activity. Functionally, ATPase component of the type III secretion system (T3SS), also called injectisome, which is used to inject bacterial effector proteins into eukaryotic host cells. Acts as a molecular motor to provide the energy that is required for the export of proteins. Required for type III secretion apparatus (T3SA) formation, proper protein secretion, host cell invasion and virulence. May play a critical role in T3SS substrate recognition, disassembly of the effector/chaperone complex and unfolding of the effector in an ATP-dependent manner prior to secretion. The sequence is that of Type 3 secretion system ATPase from Pseudomonas savastanoi pv. phaseolicola (Pseudomonas syringae pv. phaseolicola).